Here is a 475-residue protein sequence, read N- to C-terminus: 3-isopropylmalate dehydratase large subunit (475 aa).

[4Fe-4S] cluster contacts are provided by cysteine 353, cysteine 414, and cysteine 417.

It belongs to the aconitase/IPM isomerase family. LeuC type 1 subfamily. Heterodimer of LeuC and LeuD. Requires [4Fe-4S] cluster as cofactor.

The enzyme catalyses (2R,3S)-3-isopropylmalate = (2S)-2-isopropylmalate. Its pathway is amino-acid biosynthesis; L-leucine biosynthesis; L-leucine from 3-methyl-2-oxobutanoate: step 2/4. Its function is as follows. Catalyzes the isomerization between 2-isopropylmalate and 3-isopropylmalate, via the formation of 2-isopropylmaleate. The chain is 3-isopropylmalate dehydratase large subunit from Marinomonas sp. (strain MWYL1).